The sequence spans 220 residues: Protein US2 homolog (220 aa).

Belongs to the herpesviridae US2 family.

The chain is Protein US2 homolog from Bovine herpesvirus 1.2 (strain ST) (BoHV-1).